Here is a 210-residue protein sequence, read N- to C-terminus: ATP-dependent Clp protease proteolytic subunit (210 aa).

Catalysis depends on Ser-107, which acts as the Nucleophile. His-132 is an active-site residue.

The protein belongs to the peptidase S14 family. As to quaternary structure, fourteen ClpP subunits assemble into 2 heptameric rings which stack back to back to give a disk-like structure with a central cavity, resembling the structure of eukaryotic proteasomes.

It localises to the cytoplasm. It catalyses the reaction Hydrolysis of proteins to small peptides in the presence of ATP and magnesium. alpha-casein is the usual test substrate. In the absence of ATP, only oligopeptides shorter than five residues are hydrolyzed (such as succinyl-Leu-Tyr-|-NHMec, and Leu-Tyr-Leu-|-Tyr-Trp, in which cleavage of the -Tyr-|-Leu- and -Tyr-|-Trp bonds also occurs).. Functionally, cleaves peptides in various proteins in a process that requires ATP hydrolysis. Has a chymotrypsin-like activity. Plays a major role in the degradation of misfolded proteins. In Azorhizobium caulinodans (strain ATCC 43989 / DSM 5975 / JCM 20966 / LMG 6465 / NBRC 14845 / NCIMB 13405 / ORS 571), this protein is ATP-dependent Clp protease proteolytic subunit.